The sequence spans 106 residues: Aspartyl/glutamyl-tRNA(Asn/Gln) amidotransferase subunit C (106 aa).

It belongs to the GatC family. As to quaternary structure, heterotrimer of A, B and C subunits.

The enzyme catalyses L-glutamyl-tRNA(Gln) + L-glutamine + ATP + H2O = L-glutaminyl-tRNA(Gln) + L-glutamate + ADP + phosphate + H(+). The catalysed reaction is L-aspartyl-tRNA(Asn) + L-glutamine + ATP + H2O = L-asparaginyl-tRNA(Asn) + L-glutamate + ADP + phosphate + 2 H(+). In terms of biological role, allows the formation of correctly charged Asn-tRNA(Asn) or Gln-tRNA(Gln) through the transamidation of misacylated Asp-tRNA(Asn) or Glu-tRNA(Gln) in organisms which lack either or both of asparaginyl-tRNA or glutaminyl-tRNA synthetases. The reaction takes place in the presence of glutamine and ATP through an activated phospho-Asp-tRNA(Asn) or phospho-Glu-tRNA(Gln). The sequence is that of Aspartyl/glutamyl-tRNA(Asn/Gln) amidotransferase subunit C from Lactiplantibacillus plantarum (strain ATCC BAA-793 / NCIMB 8826 / WCFS1) (Lactobacillus plantarum).